A 377-amino-acid chain; its full sequence is MSRGIIIIGSGFAARQLVKNIRKQDAHVPLTLIAADSMDEYNKPDLSHVISQSQRADDLTRQLAGEFAEQFNLRLFPHIRVADIDADAHVVKSQDKQWQYDKLVLATGATAFVPPIAGRELMLTLNSQQEYRACETQLRDAQRVLIVGGGLIGSELAMDFCRAGKTVTLMDNAASLLASLMPPEVSSRLQHHLTDMGVHLLLKSQLQKLEKIEAGIRATLASQRSIEVDAVIAATGLRPETALARRAGVAVNRGVCVDSYLQTSHPDIYAIGDCAEINGQVLPFLQPIQLSAMYLAKNLFGGNAPLKLPAMLVKVKTPELPLHLAGETQRRDLSWQITAESDGMIAKGMSGEGQLRAFVVSEDRMKEAFALLKTLSV.

The protein belongs to the FAD-dependent oxidoreductase family. FAD is required as a cofactor.

It is found in the cytoplasm. It catalyses the reaction 2 reduced [nitric oxide reductase rubredoxin domain] + NAD(+) + H(+) = 2 oxidized [nitric oxide reductase rubredoxin domain] + NADH. It functions in the pathway nitrogen metabolism; nitric oxide reduction. Functionally, one of at least two accessory proteins for anaerobic nitric oxide (NO) reductase. Reduces the rubredoxin moiety of NO reductase. This Salmonella agona (strain SL483) protein is Nitric oxide reductase FlRd-NAD(+) reductase.